A 245-amino-acid chain; its full sequence is Uridylate kinase (245 aa).

Lys12–Gly15 lines the ATP pocket. Gly55 provides a ligand contact to UMP. ATP-binding residues include Gly56 and Arg60. UMP contacts are provided by residues Asp76 and Ala137 to Thr144. Residues Thr164, Tyr171, and Asp174 each contribute to the ATP site.

The protein belongs to the UMP kinase family. In terms of assembly, homohexamer.

The protein localises to the cytoplasm. It carries out the reaction UMP + ATP = UDP + ADP. Its pathway is pyrimidine metabolism; CTP biosynthesis via de novo pathway; UDP from UMP (UMPK route): step 1/1. Its activity is regulated as follows. Inhibited by UTP. Catalyzes the reversible phosphorylation of UMP to UDP. The chain is Uridylate kinase from Chlamydia muridarum (strain MoPn / Nigg).